Here is a 42-residue protein sequence, read N- to C-terminus: Osteocalcin (42 aa).

The region spanning Y1 to G40 is the Gla domain. Position 9 is a 4-hydroxyproline (P9). Ca(2+) contacts are provided by E17, E21, and D23. E17 and E21 each carry 4-carboxyglutamate.

It belongs to the osteocalcin/matrix Gla protein family. Post-translationally, gamma-carboxyglutamic acid residues are formed by vitamin K dependent carboxylation. These residues are essential for the binding of calcium.

It is found in the secreted. Its function is as follows. The carboxylated form is one of the main organic components of the bone matrix, which constitutes 1-2% of the total bone protein: it acts as a negative regulator of bone formation and is required to limit bone formation without impairing bone resorption or mineralization. The carboxylated form binds strongly to apatite and calcium. In terms of biological role, the uncarboxylated form acts as a hormone secreted by osteoblasts, which regulates different cellular processes, such as energy metabolism, male fertility and brain development. Regulates of energy metabolism by acting as a hormone favoring pancreatic beta-cell proliferation, insulin secretion and sensitivity and energy expenditure. Uncarboxylated osteocalcin hormone also promotes testosterone production in the testes: acts as a ligand for G protein-coupled receptor GPRC6A at the surface of Leydig cells, initiating a signaling response that promotes the expression of enzymes required for testosterone synthesis in a CREB-dependent manner. Also acts as a regulator of brain development: osteocalcin hormone crosses the blood-brain barrier and acts as a ligand for GPR158 on neurons, initiating a signaling response that prevents neuronal apoptosis in the hippocampus, favors the synthesis of all monoamine neurotransmitters and inhibits that of gamma-aminobutyric acid (GABA). Osteocalcin also crosses the placenta during pregnancy and maternal osteocalcin is required for fetal brain development. The protein is Osteocalcin of Camelops hesternus (Western camel).